The primary structure comprises 339 residues: UDP-N-acetylenolpyruvoylglucosamine reductase (339 aa).

One can recognise an FAD-binding PCMH-type domain in the interval 19 to 189 (VDVQARLFAE…LRVRFKLSRV (171 aa)). Residue R166 is part of the active site. S239 functions as the Proton donor in the catalytic mechanism. E335 is a catalytic residue.

The protein belongs to the MurB family. FAD serves as cofactor.

It is found in the cytoplasm. The enzyme catalyses UDP-N-acetyl-alpha-D-muramate + NADP(+) = UDP-N-acetyl-3-O-(1-carboxyvinyl)-alpha-D-glucosamine + NADPH + H(+). The protein operates within cell wall biogenesis; peptidoglycan biosynthesis. Its function is as follows. Cell wall formation. This Pseudomonas savastanoi pv. phaseolicola (strain 1448A / Race 6) (Pseudomonas syringae pv. phaseolicola (strain 1448A / Race 6)) protein is UDP-N-acetylenolpyruvoylglucosamine reductase.